A 101-amino-acid polypeptide reads, in one-letter code: Protein Tat (101 aa).

Residues 1-24 form an interaction with human CREBBP region; the sequence is MEPVDPNLEPWKHPGSQPRTACNN. A transactivation region spans residues 1 to 48; that stretch reads MEPVDPNLEPWKHPGSQPRTACNNCYCKKCCFHCYACFTRKGLGISYG. Residues Cys-22, Cys-25, and Cys-27 each contribute to the Zn(2+) site. A cysteine-rich region spans residues 22-37; sequence CNNCYCKKCCFHCYAC. At Lys-28 the chain carries N6-acetyllysine; by host PCAF. Residues Cys-30, His-33, Cys-34, and Cys-37 each coordinate Zn(2+). The tract at residues 38 to 48 is core; the sequence is FTRKGLGISYG. Basic residues predominate over residues 48 to 57; the sequence is GRKKRRQRRR. The interval 48-101 is disordered; it reads GRKKRRQRRRAPQDSQTHQASLSKQPASQSRGDPTGPTESKKKVERETETDPFD. Positions 49-57 match the Nuclear localization signal, RNA-binding (TAR), and protein transduction motif; sequence RKKRRQRRR. Residues 49–86 are interaction with the host capping enzyme RNGTT; the sequence is RKKRRQRRRAPQDSQTHQASLSKQPASQSRGDPTGPTE. 2 positions are modified to N6-acetyllysine; by host EP300 and GCN5L2: Lys-50 and Lys-51. 2 positions are modified to asymmetric dimethylarginine; by host PRMT6: Arg-52 and Arg-53. Polar residues predominate over residues 60–79; that stretch reads QDSQTHQASLSKQPASQSRG. A Glycyl lysine isopeptide (Lys-Gly) (interchain with G-Cter in ubiquitin) cross-link involves residue Lys-71. Positions 78–80 match the Cell attachment site motif; the sequence is RGD. A compositionally biased stretch (basic and acidic residues) spans 86–101; it reads ESKKKVERETETDPFD.

It belongs to the lentiviruses Tat family. In terms of assembly, interacts with host CCNT1. Associates with the P-TEFb complex composed at least of Tat, P-TEFb (CDK9 and CCNT1), TAR RNA, RNA Pol II. Recruits the HATs CREBBP, TAF1/TFIID, EP300, PCAF and GCN5L2. Interacts with host KAT5/Tip60; this interaction targets the latter to degradation. Interacts with the host deacetylase SIRT1. Interacts with host capping enzyme RNGTT; this interaction stimulates RNGTT. Binds to host KDR, and to the host integrins ITGAV/ITGB3 and ITGA5/ITGB1. Interacts with host KPNB1/importin beta-1 without previous binding to KPNA1/importin alpha-1. Interacts with EIF2AK2. Interacts with host nucleosome assembly protein NAP1L1; this interaction may be required for the transport of Tat within the nucleus, since the two proteins interact at the nuclear rim. Interacts with host C1QBP/SF2P32; this interaction involves lysine-acetylated Tat. Interacts with the host chemokine receptors CCR2, CCR3 and CXCR4. Interacts with host DPP4/CD26; this interaction may trigger an anti-proliferative effect. Interacts with host LDLR. Interacts with the host extracellular matrix metalloproteinase MMP1. Interacts with host PRMT6; this interaction mediates Tat's methylation. Interacts with, and is ubiquitinated by MDM2/Hdm2. Interacts with host PSMC3 and HTATIP2. Interacts with STAB1; this interaction may overcome SATB1-mediated repression of IL2 and IL2RA (interleukin) in T cells by binding to the same domain than HDAC1. Interacts (when acetylated) with human CDK13, thereby increasing HIV-1 mRNA splicing and promoting the production of the doubly spliced HIV-1 protein Nef. Interacts with host TBP; this interaction modulates the activity of transcriptional pre-initiation complex. Interacts with host RELA. Interacts with host PLSCR1; this interaction negatively regulates Tat transactivation activity by altering its subcellular distribution. Post-translationally, asymmetrical arginine methylation by host PRMT6 seems to diminish the transactivation capacity of Tat and affects the interaction with host CCNT1. In terms of processing, acetylation by EP300, CREBBP, GCN5L2/GCN5 and PCAF regulates the transactivation activity of Tat. EP300-mediated acetylation of Lys-50 promotes dissociation of Tat from the TAR RNA through the competitive binding to PCAF's bromodomain. In addition, the non-acetylated Tat's N-terminus can also interact with PCAF. PCAF-mediated acetylation of Lys-28 enhances Tat's binding to CCNT1. Lys-50 is deacetylated by SIRT1. Polyubiquitination by host MDM2 does not target Tat to degradation, but activates its transactivation function and fosters interaction with CCNT1 and TAR RNA. Post-translationally, phosphorylated by EIF2AK2 on serine and threonine residues adjacent to the basic region important for TAR RNA binding and function. Phosphorylation of Tat by EIF2AK2 is dependent on the prior activation of EIF2AK2 by dsRNA.

It localises to the host nucleus. Its subcellular location is the host nucleolus. It is found in the host cytoplasm. The protein resides in the secreted. Transcriptional activator that increases RNA Pol II processivity, thereby increasing the level of full-length viral transcripts. Recognizes a hairpin structure at the 5'-LTR of the nascent viral mRNAs referred to as the transactivation responsive RNA element (TAR) and recruits the cyclin T1-CDK9 complex (P-TEFb complex) that will in turn hyperphosphorylate the RNA polymerase II to allow efficient elongation. The CDK9 component of P-TEFb and other Tat-activated kinases hyperphosphorylate the C-terminus of RNA Pol II that becomes stabilized and much more processive. Other factors such as HTATSF1/Tat-SF1, SUPT5H/SPT5, and HTATIP2 are also important for Tat's function. Besides its effect on RNA Pol II processivity, Tat induces chromatin remodeling of proviral genes by recruiting the histone acetyltransferases (HATs) CREBBP, EP300 and PCAF to the chromatin. This also contributes to the increase in proviral transcription rate, especially when the provirus integrates in transcriptionally silent region of the host genome. To ensure maximal activation of the LTR, Tat mediates nuclear translocation of NF-kappa-B by interacting with host RELA. Through its interaction with host TBP, Tat may also modulate transcription initiation. Tat can reactivate a latently infected cell by penetrating in it and transactivating its LTR promoter. In the cytoplasm, Tat is thought to act as a translational activator of HIV-1 mRNAs. In terms of biological role, extracellular circulating Tat can be endocytosed by surrounding uninfected cells via the binding to several surface receptors such as CD26, CXCR4, heparan sulfate proteoglycans (HSPG) or LDLR. Neurons are rarely infected, but they internalize Tat via their LDLR. Through its interaction with nuclear HATs, Tat is potentially able to control the acetylation-dependent cellular gene expression. Modulates the expression of many cellular genes involved in cell survival, proliferation or in coding for cytokines or cytokine receptors. Tat plays a role in T-cell and neurons apoptosis. Tat induced neurotoxicity and apoptosis probably contribute to neuroAIDS. Circulating Tat also acts as a chemokine-like and/or growth factor-like molecule that binds to specific receptors on the surface of the cells, affecting many cellular pathways. In the vascular system, Tat binds to ITGAV/ITGB3 and ITGA5/ITGB1 integrins dimers at the surface of endothelial cells and competes with bFGF for heparin-binding sites, leading to an excess of soluble bFGF. This is Protein Tat from Homo sapiens (Human).